Consider the following 874-residue polypeptide: AP-1 complex subunit gamma-1 (874 aa).

Residues 761 to 873 form the GAE domain; it reads TVAKSHTVYT…QDQTDWAQPS (113 aa).

It belongs to the adaptor complexes large subunit family. In terms of assembly, adaptor protein complex 1 (AP-1) is a heterotetramer composed of two large adaptins (gamma-type subunit APL4 and beta-type subunit APL2), a medium adaptin (mu-type subunit APM1) and a small adaptin (sigma-type subunit APS1). AP-1 interacts with clathrin.

Its subcellular location is the cytoplasmic vesicle. The protein localises to the clathrin-coated vesicle membrane. It is found in the golgi apparatus. Functionally, adaptins are components of the adaptor complexes which link clathrin to receptors in coated vesicles. Clathrin-associated protein complexes are believed to interact with the cytoplasmic tails of membrane proteins, leading to their selection and concentration. The AP-1 complex interacts directly with clathrin. Required for apical growth extension. This is AP-1 complex subunit gamma-1 (APL4) from Mycosarcoma maydis (Corn smut fungus).